The chain runs to 55 residues: uncharacterized protein (55 aa).

The interval 1–30 (MDKPTVETSAAPVETLVLTEPPAETQAEDS) is disordered.

This is an uncharacterized protein from Frog virus 3 (isolate Goorha) (FV-3).